The sequence spans 436 residues: 3-ketoacyl-CoA thiolase (436 aa).

C99 functions as the Acyl-thioester intermediate in the catalytic mechanism. Residues H392 and C422 each act as proton acceptor in the active site.

Belongs to the thiolase-like superfamily. Thiolase family. Heterotetramer of two alpha chains (FadJ) and two beta chains (FadI).

The protein resides in the cytoplasm. It carries out the reaction an acyl-CoA + acetyl-CoA = a 3-oxoacyl-CoA + CoA. It functions in the pathway lipid metabolism; fatty acid beta-oxidation. Its function is as follows. Catalyzes the final step of fatty acid oxidation in which acetyl-CoA is released and the CoA ester of a fatty acid two carbons shorter is formed. This Shewanella piezotolerans (strain WP3 / JCM 13877) protein is 3-ketoacyl-CoA thiolase.